We begin with the raw amino-acid sequence, 413 residues long: Tryptophan synthase beta chain (413 aa).

Lys-107 carries the N6-(pyridoxal phosphate)lysine modification.

The protein belongs to the TrpB family. In terms of assembly, tetramer of two alpha and two beta chains. Pyridoxal 5'-phosphate serves as cofactor.

It carries out the reaction (1S,2R)-1-C-(indol-3-yl)glycerol 3-phosphate + L-serine = D-glyceraldehyde 3-phosphate + L-tryptophan + H2O. It functions in the pathway amino-acid biosynthesis; L-tryptophan biosynthesis; L-tryptophan from chorismate: step 5/5. Functionally, the beta subunit is responsible for the synthesis of L-tryptophan from indole and L-serine. This Trichormus variabilis (strain ATCC 29413 / PCC 7937) (Anabaena variabilis) protein is Tryptophan synthase beta chain.